The chain runs to 195 residues: uncharacterized protein (195 aa).

Residues 175–195 form a helical membrane-spanning segment; the sequence is ILGKISGFFGSIVSTIFSLFG.

Its subcellular location is the membrane. This is an uncharacterized protein from Methanocaldococcus jannaschii (strain ATCC 43067 / DSM 2661 / JAL-1 / JCM 10045 / NBRC 100440) (Methanococcus jannaschii).